The primary structure comprises 266 residues: Apolipoprotein A-I (266 aa).

A signal peptide spans 1–18; sequence MKAVVLTLAVLFLTGSQA. Repeat copies occupy residues 67–88 and 89–110. The segment at 67-266 is 10 X approximate tandem repeats; that stretch reads LKLLDNWDSL…DEATKKLNSQ (200 aa). At Met-109 the chain carries Methionine sulfoxide. The 3; half-length repeat unit spans residues 111 to 121; sequence KDLEEVKKKVQ. Repeat copies occupy residues 122-143, 144-165, 166-187, 188-209, and 210-231. The stretch at 232–242 is one 9; half-length repeat; it reads PALEDLRQGLL. Repeat 10 spans residues 243–266; that stretch reads PVLENFRVSLLAAVDEATKKLNSQ.

It belongs to the apolipoprotein A1/A4/E family. Homodimer. Interacts with APOA1BP and CLU. Component of a sperm activating protein complex (SPAP), consisting of APOA1, an immunoglobulin heavy chain, an immunoglobulin light chain and albumin. Interacts with NDRG1. Interacts with SCGB3A2. Interacts with NAXE and YJEFN3. In terms of processing, glycosylated. Palmitoylated. Post-translationally, phosphorylation sites are present in the extracellular medium.

It is found in the secreted. In terms of biological role, participates in the reverse transport of cholesterol from tissues to the liver for excretion by promoting cholesterol efflux from tissues and by acting as a cofactor for the lecithin cholesterol acyltransferase (LCAT). As part of the SPAP complex, activates spermatozoa motility. This is Apolipoprotein A-I (APOA1) from Leptonychotes weddellii (Weddell seal).